The primary structure comprises 105 residues: uncharacterized protein (105 aa).

The interval 1 to 27 (MSLKSWHPQSKTKRVGASEGNPQWGSG) is disordered.

This is an uncharacterized protein from Homo sapiens (Human).